A 182-amino-acid chain; its full sequence is Adenine phosphoribosyltransferase (182 aa).

The protein belongs to the purine/pyrimidine phosphoribosyltransferase family. In terms of assembly, homodimer.

It localises to the cytoplasm. The enzyme catalyses AMP + diphosphate = 5-phospho-alpha-D-ribose 1-diphosphate + adenine. The protein operates within purine metabolism; AMP biosynthesis via salvage pathway; AMP from adenine: step 1/1. In terms of biological role, catalyzes a salvage reaction resulting in the formation of AMP, that is energically less costly than de novo synthesis. The chain is Adenine phosphoribosyltransferase from Pseudomonas fluorescens (strain SBW25).